A 380-amino-acid chain; its full sequence is Tubulin-like protein CetZ (380 aa).

Residues 10–14 (QCGTK), 103–105 (GTG), E136, N163, and N181 contribute to the GTP site. The disordered stretch occupies residues 359 to 380 (PSLEATGSDDPEGFAEYREVSR).

Belongs to the CetZ family.

The protein localises to the cytoplasm. In terms of biological role, involved in cell shape control. This chain is Tubulin-like protein CetZ, found in Thermococcus kodakarensis (strain ATCC BAA-918 / JCM 12380 / KOD1) (Pyrococcus kodakaraensis (strain KOD1)).